Here is a 541-residue protein sequence, read N- to C-terminus: Chaperonin GroEL (541 aa).

Residues Thr-29–Pro-32, Asp-86–Thr-90, Gly-413, Asn-476–Ala-478, and Asp-492 contribute to the ATP site. A disordered region spans residues Lys-521–Met-541. A compositionally biased stretch (low complexity) spans Pro-526 to Pro-535.

This sequence belongs to the chaperonin (HSP60) family. As to quaternary structure, forms a cylinder of 14 subunits composed of two heptameric rings stacked back-to-back. Interacts with the co-chaperonin GroES.

It is found in the cytoplasm. The catalysed reaction is ATP + H2O + a folded polypeptide = ADP + phosphate + an unfolded polypeptide.. In terms of biological role, together with its co-chaperonin GroES, plays an essential role in assisting protein folding. The GroEL-GroES system forms a nano-cage that allows encapsulation of the non-native substrate proteins and provides a physical environment optimized to promote and accelerate protein folding. This is Chaperonin GroEL from Levilactobacillus brevis (strain ATCC 367 / BCRC 12310 / CIP 105137 / JCM 1170 / LMG 11437 / NCIMB 947 / NCTC 947) (Lactobacillus brevis).